A 176-amino-acid chain; its full sequence is GTP-dependent dephospho-CoA kinase (176 aa).

The GTP site is built by Asp-47, Val-48, Asp-66, and Glu-125.

It belongs to the GTP-dependent DPCK family.

The catalysed reaction is 3'-dephospho-CoA + GTP = GDP + CoA + H(+). It participates in cofactor biosynthesis; coenzyme A biosynthesis. Functionally, catalyzes the GTP-dependent phosphorylation of the 3'-hydroxyl group of dephosphocoenzyme A to form coenzyme A (CoA). This is GTP-dependent dephospho-CoA kinase from Methanocella arvoryzae (strain DSM 22066 / NBRC 105507 / MRE50).